The following is a 1662-amino-acid chain: Cortactin-binding protein 2 (1662 aa).

Disordered stretches follow at residues 1-23 (MATD…AGAA), 202-235 (KKKT…EFDT), 365-439 (IGVS…LHPG), and 453-477 (GNAN…SPTS). A coiled-coil region spans residues 118-275 (RKMQERMSAQ…EQLKRGSDSK (158 aa)). Residues 385 to 395 (PSTGSTPDPTS) are compositionally biased toward low complexity. Polar residues predominate over residues 404–421 (AAPSTAQTPGITPQNSQA). Arg-497 carries the asymmetric dimethylarginine modification. The segment at 498-615 (FTGPQAGAPP…SSPQLPPKPS (118 aa)) is disordered. 2 stretches are compositionally biased toward polar residues: residues 516–529 (DVST…TSVK) and 582–592 (TVASPPSSLPQ). ANK repeat units lie at residues 708 to 738 (GRPT…DINY), 742 to 771 (DGHS…QVNA), 775 to 804 (NGFT…NINH), 808 to 837 (GGQT…DRSV), and 841 to 870 (DGWT…PAHG). Residues 871-897 (NSFSEEESESGVFDLDEGEESPEGKSK) are disordered. Residues 874-891 (SEEESESGVFDLDEGEES) are compositionally biased toward acidic residues. Residues 911–941 (EGWTAAHIAASKGFKNCLEILCRHGGLETER) form an ANK 6 repeat. Residues 1446–1473 (KKKGESGAWRKVNTSPRRKSGRFSLPTW) are disordered. Ser-1523 bears the Phosphoserine mark. The interval 1614–1662 (VPRSKVTQCSQNTKRSSSSSNTRQIEINNNSKEENWNLHKNEHLEKPNK) is disordered. The segment covering 1623–1637 (SQNTKRSSSSSNTRQ) has biased composition (low complexity). Over residues 1644–1662 (SKEENWNLHKNEHLEKPNK) the composition is skewed to basic and acidic residues.

Interacts with CTTN/cortactin SH3 domain. Interacts with STRN, STRN4/zinedin and MOB4/phocein; this interactions mediate the association with the STRIPAK core complex and may regulate dendritic spine distribution of the STRIPAK complex in hippocampal neurons. Activation of glutamate receptors weakens the interaction with STRN and STRN4.

It localises to the cytoplasm. The protein resides in the cell cortex. It is found in the cell projection. The protein localises to the dendritic spine. Regulates the dendritic spine distribution of CTTN/cortactin in hippocampal neurons, and thus controls dendritic spinogenesis and dendritic spine maintenance. Associates with the striatin-interacting phosphatase and kinase (STRIPAK) core complex to regulate dendritic spine distribution of the STRIPAK complex in hippocampal neurons. The polypeptide is Cortactin-binding protein 2 (CTTNBP2) (Callithrix jacchus (White-tufted-ear marmoset)).